The chain runs to 433 residues: Methylenetetrahydrofolate--tRNA-(uracil-5-)-methyltransferase TrmFO (433 aa).

Residue 8–13 (GAGLAG) coordinates FAD.

It belongs to the MnmG family. TrmFO subfamily. FAD is required as a cofactor.

The protein localises to the cytoplasm. It catalyses the reaction uridine(54) in tRNA + (6R)-5,10-methylene-5,6,7,8-tetrahydrofolate + NADH + H(+) = 5-methyluridine(54) in tRNA + (6S)-5,6,7,8-tetrahydrofolate + NAD(+). The catalysed reaction is uridine(54) in tRNA + (6R)-5,10-methylene-5,6,7,8-tetrahydrofolate + NADPH + H(+) = 5-methyluridine(54) in tRNA + (6S)-5,6,7,8-tetrahydrofolate + NADP(+). Functionally, catalyzes the folate-dependent formation of 5-methyl-uridine at position 54 (M-5-U54) in all tRNAs. The protein is Methylenetetrahydrofolate--tRNA-(uracil-5-)-methyltransferase TrmFO of Carboxydothermus hydrogenoformans (strain ATCC BAA-161 / DSM 6008 / Z-2901).